The sequence spans 123 residues: Large ribosomal subunit protein bL12 (123 aa).

This sequence belongs to the bacterial ribosomal protein bL12 family. As to quaternary structure, homodimer. Part of the ribosomal stalk of the 50S ribosomal subunit. Forms a multimeric L10(L12)X complex, where L10 forms an elongated spine to which 2 to 4 L12 dimers bind in a sequential fashion. Binds GTP-bound translation factors.

In terms of biological role, forms part of the ribosomal stalk which helps the ribosome interact with GTP-bound translation factors. Is thus essential for accurate translation. This is Large ribosomal subunit protein bL12 from Ectopseudomonas mendocina (strain ymp) (Pseudomonas mendocina).